We begin with the raw amino-acid sequence, 304 residues long: MKTPLIVICGPTASGKSGLAIDLSVRLNSIIISADSRQVYREFDIGTAKPSIDEQKLIPHYLIDICEPTESLTLAQYQEKAQLIIHSFSSVVSPILVGGTGLYLKSVVKGMKIPRVSPQPQLRSQLEALGQSYLYNLLSQVDPIASQKIHPHDQIRTIRALEVFYVTGKPISSQQGENPPDYPIIQIGLDCEVNALEKRIQQRTEQMIESGLVEEVEKLIDKYGENLPLLDTLGYAEMKQYLAGKISLSEAKELTVLHTRQFAKRQRTWFRAYPEIHWFDANAPHLLDQVTQLIRDNCSLIVSH.

Residue 10-17 participates in ATP binding; it reads GPTASGKS. 12-17 lines the substrate pocket; sequence TASGKS. An interaction with substrate tRNA region spans residues 35–38; that stretch reads DSRQ.

Belongs to the IPP transferase family. In terms of assembly, monomer. The cofactor is Mg(2+).

It catalyses the reaction adenosine(37) in tRNA + dimethylallyl diphosphate = N(6)-dimethylallyladenosine(37) in tRNA + diphosphate. In terms of biological role, catalyzes the transfer of a dimethylallyl group onto the adenine at position 37 in tRNAs that read codons beginning with uridine, leading to the formation of N6-(dimethylallyl)adenosine (i(6)A). This is tRNA dimethylallyltransferase from Gloeothece citriformis (strain PCC 7424) (Cyanothece sp. (strain PCC 7424)).